The primary structure comprises 801 residues: N,N'-diacetylchitobiose phosphorylase (801 aa).

Arginine 333, arginine 343, arginine 349, aspartate 350, tryptophan 490, and aspartate 492 together coordinate N-acetyl-alpha-D-glucosamine 1-phosphate. The active-site Proton donor is aspartate 492. Residues aspartate 492, lysine 636, and glutamate 637 each contribute to the N-acetyl-D-glucosamine site. N-acetyl-alpha-D-glucosamine 1-phosphate is bound by residues glutamate 637, histidine 644, glutamine 690, threonine 709, and glycine 710.

Belongs to the glycosyl hydrolase 94 family. As to quaternary structure, homodimer.

The catalysed reaction is N,N'-diacetylchitobiose + phosphate = N-acetyl-alpha-D-glucosamine 1-phosphate + N-acetyl-D-glucosamine. Functionally, catalyzes the reversible phosphorolysis of chitobiose (N,N'-diacetylchitobiose or (GlcNAc)(2)) into N-acetyl-alpha-D-glucosamine 1-phosphate (GlcNAc-1-P) and N-acetyl-D-glucosamine (GlcNAc) with inversion of the anomeric configuration. In the synthetic reaction, is also active on glucose-1-phosphate with 10% activity as compared with that on GlcNAc-1-P. GlcNAc is the best acceptor substrate, but the enzyme can use aryl-beta-glycosides of GlcNAc as the acceptor substrate with 10-20% activities of GlcNAc. Shows no phosphorolytic activity on cellobiose. The chain is N,N'-diacetylchitobiose phosphorylase from Vibrio proteolyticus (Aeromonas proteolytica).